The sequence spans 129 residues: Histone H2A.J (129 aa).

Residues 1–22 (MSGRGKQGGKVRAKAKSRSSRA) form a disordered region. N-acetylserine is present on Ser2. Ser2 carries the post-translational modification Phosphoserine. Lys6 carries the post-translational modification N6-acetyllysine. Residues 7 to 19 (QGGKVRAKAKSRS) are compositionally biased toward basic residues. Lys10 is modified (N6-lactoyllysine; alternate). Residues Lys14 and Lys16 each participate in a glycyl lysine isopeptide (Lys-Gly) (interchain with G-Cter in ubiquitin) cross-link. Gln105 is modified (N5-methylglutamine). Residue Lys120 forms a Glycyl lysine isopeptide (Lys-Gly) (interchain with G-Cter in ubiquitin) linkage.

The protein belongs to the histone H2A family. In terms of assembly, the nucleosome is a histone octamer containing two molecules each of H2A, H2B, H3 and H4 assembled in one H3-H4 heterotetramer and two H2A-H2B heterodimers. The octamer wraps approximately 147 bp of DNA. Monoubiquitination of Lys-120 (H2AXK119ub) gives a specific tag for epigenetic transcriptional repression. Following DNA double-strand breaks (DSBs), it is ubiquitinated through 'Lys-63' linkage of ubiquitin moieties. Post-translationally, phosphorylation on Ser-2 is enhanced during mitosis. Phosphorylation on Ser-2 directly represses transcription.

The protein resides in the nucleus. Its subcellular location is the chromosome. Its function is as follows. Core component of nucleosome. Nucleosomes wrap and compact DNA into chromatin, limiting DNA accessibility to the cellular machineries which require DNA as a template. Histones thereby play a central role in transcription regulation, DNA repair, DNA replication and chromosomal stability. DNA accessibility is regulated via a complex set of post-translational modifications of histones, also called histone code, and nucleosome remodeling. The protein is Histone H2A.J (H2A-IX) of Gallus gallus (Chicken).